A 417-amino-acid chain; its full sequence is Serine/threonine transporter SstT (417 aa).

Helical transmembrane passes span 21 to 41 (ILAG…VAKM), 49 to 69 (FISA…MASI), 83 to 103 (ILVL…VASF), 142 to 162 (ALIN…GLAL), 193 to 213 (IGIF…ALAG), 218 to 238 (LLVL…LIVF), 291 to 311 (IPLG…ILTL), and 331 to 351 (LVAA…LLLI).

The protein belongs to the dicarboxylate/amino acid:cation symporter (DAACS) (TC 2.A.23) family.

The protein resides in the cell inner membrane. It catalyses the reaction L-serine(in) + Na(+)(in) = L-serine(out) + Na(+)(out). The enzyme catalyses L-threonine(in) + Na(+)(in) = L-threonine(out) + Na(+)(out). Involved in the import of serine and threonine into the cell, with the concomitant import of sodium (symport system). In Proteus mirabilis (strain HI4320), this protein is Serine/threonine transporter SstT.